A 134-amino-acid polypeptide reads, in one-letter code: Endoribonuclease YbeY (134 aa).

3 residues coordinate Zn(2+): His-94, His-98, and His-104.

The protein belongs to the endoribonuclease YbeY family. Requires Zn(2+) as cofactor.

Its subcellular location is the cytoplasm. Its function is as follows. Single strand-specific metallo-endoribonuclease involved in late-stage 70S ribosome quality control and in maturation of the 3' terminus of the 16S rRNA. This chain is Endoribonuclease YbeY, found in Campylobacter jejuni subsp. jejuni serotype O:23/36 (strain 81-176).